We begin with the raw amino-acid sequence, 136 residues long: Group 1 truncated hemoglobin GlbN (136 aa).

His-81 provides a ligand contact to heme.

This sequence belongs to the truncated hemoglobin family. Group I subfamily. Homodimer. It depends on heme as a cofactor.

Its function is as follows. Binds oxygen cooperatively with very high affinity because of a fast combination and a slow dissociation rate. The chain is Group 1 truncated hemoglobin GlbN (glbN) from Mycolicibacterium paratuberculosis (strain ATCC BAA-968 / K-10) (Mycobacterium paratuberculosis).